Here is a 461-residue protein sequence, read N- to C-terminus: UDP-N-acetylmuramoylalanine--D-glutamate ligase (461 aa).

Position 117 to 123 (117 to 123 (GTNGKTT)) interacts with ATP.

This sequence belongs to the MurCDEF family.

The protein resides in the cytoplasm. The catalysed reaction is UDP-N-acetyl-alpha-D-muramoyl-L-alanine + D-glutamate + ATP = UDP-N-acetyl-alpha-D-muramoyl-L-alanyl-D-glutamate + ADP + phosphate + H(+). It functions in the pathway cell wall biogenesis; peptidoglycan biosynthesis. Its function is as follows. Cell wall formation. Catalyzes the addition of glutamate to the nucleotide precursor UDP-N-acetylmuramoyl-L-alanine (UMA). This is UDP-N-acetylmuramoylalanine--D-glutamate ligase from Synechococcus sp. (strain CC9605).